A 776-amino-acid polypeptide reads, in one-letter code: Lysyl oxidase homolog 2 (776 aa).

A signal peptide spans 1–25 (MEIPFGSCLYSCLALLVLLPSLSLA). SRCR domains follow at residues 61-162 (VRLA…VVCS), 191-305 (IRPI…VSCV), 329-428 (VRLR…VRCN), and 438-546 (VRLN…VACS). Intrachain disulfides connect C87–C151, C100–C161, C131–C141, C221–C294, C234–C304, C268–C278, C354–C417, C367–C427, and C398–C408. N267 carries an N-linked (GlcNAc...) asparagine glycan. N-linked (GlcNAc...) asparagine glycosylation occurs at N291. N458 is a glycosylation site (N-linked (GlcNAc...) asparagine). 3 cysteine pairs are disulfide-bonded: C467–C532, C480–C545, and C514–C524. Residues 550-753 (PDLVLNAEIV…WMYNCHVGGA (204 aa)) are lysyl-oxidase like. Residues D551 and L552 each coordinate Ca(2+). 4 disulfides stabilise this stretch: C575/C627, C581/C697, C659/C675, and C665/C687. Cu cation-binding residues include H628, H630, and H632. N646 is a glycosylation site (N-linked (GlcNAc...) asparagine). Residues 655 to 691 (KASFCLEDTECEGDIQKSYECANFGEQGITMGCWDMY) constitute a cross-link (lysine tyrosylquinone (Lys-Tyr)). Y691 is modified (2',4',5'-topaquinone). Positions 724, 726, 729, and 730 each coordinate Ca(2+). C734 and C748 are oxidised to a cystine.

This sequence belongs to the lysyl oxidase family. Component of some chromatin repressor complex. Interacts with SNAI1. Interacts with TAF10. Interacts with HSPA5. Interacts with EFEMP2. Cu cation serves as cofactor. Requires lysine tyrosylquinone residue as cofactor. The lysine tyrosylquinone cross-link (LTQ) is generated by condensation of the epsilon-amino group of a lysine with a topaquinone produced by oxidation of tyrosine. In terms of processing, N-glycosylated. N-glycosylation on Asn-458 and Asn-646 may be essential for proper folding and secretion; may be composed of a fucosylated carbohydrates attached to a trimannose N-linked glycan core.

It localises to the secreted. The protein resides in the extracellular space. It is found in the extracellular matrix. Its subcellular location is the basement membrane. The protein localises to the nucleus. It localises to the chromosome. The protein resides in the endoplasmic reticulum. The catalysed reaction is L-lysyl-[protein] + O2 + H2O = (S)-2-amino-6-oxohexanoyl-[protein] + H2O2 + NH4(+). With respect to regulation, specifically inhibited by a mouse monoclonal antibody AB0023, inhibition occurs in a non-competitive manner. Its function is as follows. Mediates the post-translational oxidative deamination of lysine residues on target proteins leading to the formation of deaminated lysine (allysine). Acts as a transcription corepressor and specifically mediates deamination of trimethylated 'Lys-4' of histone H3 (H3K4me3), a specific tag for epigenetic transcriptional activation. Shows no activity against histone H3 when it is trimethylated on 'Lys-9' (H3K9me3) or 'Lys-27' (H3K27me3) or when 'Lys-4' is monomethylated (H3K4me1) or dimethylated (H3K4me2). Also mediates deamination of methylated TAF10, a member of the transcription factor IID (TFIID) complex, which induces release of TAF10 from promoters, leading to inhibition of TFIID-dependent transcription. LOXL2-mediated deamination of TAF10 results in transcriptional repression of genes required for embryonic stem cell pluripotency including POU5F1/OCT4, NANOG, KLF4 and SOX2. Involved in epithelial to mesenchymal transition (EMT) via interaction with SNAI1 and participates in repression of E-cadherin CDH1, probably by mediating deamination of histone H3. During EMT, involved with SNAI1 in negatively regulating pericentromeric heterochromatin transcription. SNAI1 recruits LOXL2 to pericentromeric regions to oxidize histone H3 and repress transcription which leads to release of heterochromatin component CBX5/HP1A, enabling chromatin reorganization and acquisition of mesenchymal traits. Interacts with the endoplasmic reticulum protein HSPA5 which activates the IRE1-XBP1 pathway of the unfolded protein response, leading to expression of several transcription factors involved in EMT and subsequent EMT induction. When secreted into the extracellular matrix, promotes cross-linking of extracellular matrix proteins by mediating oxidative deamination of peptidyl lysine residues in precursors to fibrous collagen and elastin. Acts as a regulator of sprouting angiogenesis, probably via collagen IV scaffolding. Acts as a regulator of chondrocyte differentiation, probably by regulating expression of factors that control chondrocyte differentiation. The polypeptide is Lysyl oxidase homolog 2 (Loxl2) (Rattus norvegicus (Rat)).